The sequence spans 90 residues: Bombyxin B-12 (90 aa).

The N-terminal stretch at 1 to 20 (MMKTTIMFMLVVVISLTYSS) is a signal peptide. 3 disulfide bridges follow: C30-C76, C42-C89, and C75-C80. A propeptide spans 49–67 (SGAQYAPYFWTRQYLGSRG) (c peptide like).

Belongs to the insulin family. In terms of assembly, heterodimer of a B chain and an A chain linked by two disulfide bonds.

It is found in the secreted. In terms of biological role, brain peptide responsible for activation of prothoracic glands to produce ecdysone in insects. The sequence is that of Bombyxin B-12 (BBXB12) from Bombyx mori (Silk moth).